The primary structure comprises 491 residues: Peptidoglycan D,D-transpeptidase PbpA (491 aa).

Residues 1 to 7 (MNASLRR) are Cytoplasmic-facing. The helical; Signal-anchor for type II membrane protein transmembrane segment at 8–28 (ISVTVMALIVLLLLNATMTQV) threads the bilayer. At 29–491 (FTADGLRADP…VIEAALQGEP (463 aa)) the chain is on the periplasmic side. The tract at residues 160–484 (GAVVALEPST…AAPIGRAVIE (325 aa)) is transpeptidase. Ser222 serves as the catalytic Acyl-ester intermediate.

Belongs to the transpeptidase family.

It is found in the cell inner membrane. The catalysed reaction is Preferential cleavage: (Ac)2-L-Lys-D-Ala-|-D-Ala. Also transpeptidation of peptidyl-alanyl moieties that are N-acyl substituents of D-alanine.. The protein operates within cell wall biogenesis; peptidoglycan biosynthesis. Its function is as follows. Transpeptidase that catalyzes cross-linking of the peptidoglycan cell wall. Required for the regulation of cell length. The chain is Peptidoglycan D,D-transpeptidase PbpA (pbpA) from Mycobacterium tuberculosis (strain CDC 1551 / Oshkosh).